The chain runs to 233 residues: Protein DEHYDRATION-INDUCED 19 homolog 2 (233 aa).

The segment at 176 to 215 (DLHSDSSDNNFLLNKFPDDKTAERAEPSLSEKDQKERAQR) is disordered. Over residues 191 to 214 (FPDDKTAERAEPSLSEKDQKERAQ) the composition is skewed to basic and acidic residues.

It belongs to the Di19 family.

This Oryza sativa subsp. japonica (Rice) protein is Protein DEHYDRATION-INDUCED 19 homolog 2 (DI19-2).